We begin with the raw amino-acid sequence, 272 residues long: 3-deoxy-manno-octulosonate cytidylyltransferase (272 aa).

This sequence belongs to the KdsB family.

It is found in the cytoplasm. The catalysed reaction is 3-deoxy-alpha-D-manno-oct-2-ulosonate + CTP = CMP-3-deoxy-beta-D-manno-octulosonate + diphosphate. It functions in the pathway nucleotide-sugar biosynthesis; CMP-3-deoxy-D-manno-octulosonate biosynthesis; CMP-3-deoxy-D-manno-octulosonate from 3-deoxy-D-manno-octulosonate and CTP: step 1/1. The protein operates within bacterial outer membrane biogenesis; lipopolysaccharide biosynthesis. In terms of biological role, activates KDO (a required 8-carbon sugar) for incorporation into bacterial lipopolysaccharide in Gram-negative bacteria. In Verminephrobacter eiseniae (strain EF01-2), this protein is 3-deoxy-manno-octulosonate cytidylyltransferase.